A 199-amino-acid polypeptide reads, in one-letter code: Probable GTP-binding protein EngB (199 aa).

The region spanning 28 to 199 (DLPEIALAGR…ESWDTILEYL (172 aa)) is the EngB-type G domain. Residues 36–43 (GRSNVGKS), 63–67 (GKTQL), 81–84 (DVPG), 148–151 (TKAD), and 180–182 (FSS) contribute to the GTP site. Mg(2+)-binding residues include serine 43 and threonine 65.

The protein belongs to the TRAFAC class TrmE-Era-EngA-EngB-Septin-like GTPase superfamily. EngB GTPase family. Mg(2+) is required as a cofactor.

Functionally, necessary for normal cell division and for the maintenance of normal septation. This Streptococcus equi subsp. zooepidemicus (strain H70) protein is Probable GTP-binding protein EngB.